Consider the following 197-residue polypeptide: ATP synthase subunit delta (197 aa).

Positions 1-16 (MSSAVSASPQAASPQQ) are enriched in low complexity. The tract at residues 1–20 (MSSAVSASPQAASPQQDRTS) is disordered.

This sequence belongs to the ATPase delta chain family. As to quaternary structure, F-type ATPases have 2 components, F(1) - the catalytic core - and F(0) - the membrane proton channel. F(1) has five subunits: alpha(3), beta(3), gamma(1), delta(1), epsilon(1). F(0) has three main subunits: a(1), b(2) and c(10-14). The alpha and beta chains form an alternating ring which encloses part of the gamma chain. F(1) is attached to F(0) by a central stalk formed by the gamma and epsilon chains, while a peripheral stalk is formed by the delta and b chains.

The protein resides in the cell inner membrane. Functionally, f(1)F(0) ATP synthase produces ATP from ADP in the presence of a proton or sodium gradient. F-type ATPases consist of two structural domains, F(1) containing the extramembraneous catalytic core and F(0) containing the membrane proton channel, linked together by a central stalk and a peripheral stalk. During catalysis, ATP synthesis in the catalytic domain of F(1) is coupled via a rotary mechanism of the central stalk subunits to proton translocation. This protein is part of the stalk that links CF(0) to CF(1). It either transmits conformational changes from CF(0) to CF(1) or is implicated in proton conduction. The polypeptide is ATP synthase subunit delta (Acidiphilium cryptum (strain JF-5)).